The sequence spans 63 residues: Large ribosomal subunit protein uL29 (63 aa).

This sequence belongs to the universal ribosomal protein uL29 family.

This Flavobacterium psychrophilum (strain ATCC 49511 / DSM 21280 / CIP 103535 / JIP02/86) protein is Large ribosomal subunit protein uL29.